The chain runs to 548 residues: Chaperonin GroEL (548 aa).

ATP-binding positions include 30–33 (TLGP), K51, 87–91 (DGTTT), G415, 479–481 (NAA), and D495.

The protein belongs to the chaperonin (HSP60) family. Forms a cylinder of 14 subunits composed of two heptameric rings stacked back-to-back. Interacts with the co-chaperonin GroES.

The protein localises to the cytoplasm. The catalysed reaction is ATP + H2O + a folded polypeptide = ADP + phosphate + an unfolded polypeptide.. Together with its co-chaperonin GroES, plays an essential role in assisting protein folding. The GroEL-GroES system forms a nano-cage that allows encapsulation of the non-native substrate proteins and provides a physical environment optimized to promote and accelerate protein folding. This chain is Chaperonin GroEL, found in Klebsiella pneumoniae subsp. pneumoniae (strain ATCC 700721 / MGH 78578).